A 66-amino-acid polypeptide reads, in one-letter code: Beta-toxin Cll1m (66 aa).

The 66-residue stretch at 1-66 folds into the LCN-type CS-alpha/beta domain; the sequence is KEGYIVNLST…VWPLPKKTCT (66 aa). Intrachain disulfides connect Cys12-Cys65, Cys16-Cys41, Cys25-Cys46, and Cys29-Cys48. Thr66 is modified (threonine amide).

Belongs to the long (4 C-C) scorpion toxin superfamily. Sodium channel inhibitor family. Beta subfamily. Expressed by the venom gland.

It is found in the secreted. In terms of biological role, beta toxins bind voltage-independently at site-4 of sodium channels (Nav) and shift the voltage of activation toward more negative potentials thereby affecting sodium channel activation and promoting spontaneous and repetitive firing. The sequence is that of Beta-toxin Cll1m from Centruroides limpidus (Mexican scorpion).